The primary structure comprises 187 residues: Early nodulin-55-2 (187 aa).

Positions methionine 1–alanine 26 are cleaved as a signal peptide. A Phytocyanin domain is found at glutamate 27 to serine 132. Residues asparagine 78, asparagine 116, and asparagine 134 are each glycosylated (N-linked (GlcNAc...) asparagine). The cysteines at positions 85 and 120 are disulfide-linked. Residues lysine 138–glycine 167 form a disordered region. Residues serine 144–leucine 162 are compositionally biased toward pro residues.

Belongs to the early nodulin-like (ENODL) family.

The protein localises to the symbiosome. Its subcellular location is the peribacteroid membrane. Functionally, may act as a carbohydrate transporter. The chain is Early nodulin-55-2 from Glycine max (Soybean).